A 280-amino-acid polypeptide reads, in one-letter code: Merozoite surface protein 2 (280 aa).

The signal sequence occupies residues M1–I20. Residues N22 and N36 are each glycosylated (N-linked (GlcNAc...) asparagine). Residues A44–A206 form a polymorphic region region. Residues G47–K242 are disordered. The interval K51–A74 is 5 X 12 AA tandem repeats of P-P-I-T-T-T-E-S-N-S-R-S. Over residues A64–T98 the composition is skewed to low complexity. A compositionally biased stretch (polar residues) spans E99–N149. 4 repeat units span residues P105–S116, P117–S128, P129–S140, and P141–S152. Positions S150–S163 are enriched in low complexity. A 5; partial repeat occupies P153–S160. N-linked (GlcNAc...) asparagine glycosylation is present at N168. Positions T170–E182 are enriched in basic and acidic residues. N-linked (GlcNAc...) asparagine glycosylation is found at N184 and N229. A compositionally biased stretch (basic and acidic residues) spans S233–K242. C237 and C245 are disulfide-bonded. N253 and N254 each carry an N-linked (GlcNAc...) asparagine glycan. Residue N254 is the site of GPI-anchor amidated asparagine attachment. A propeptide spans S255–I280 (removed in mature form).

The protein resides in the cell membrane. May play a role in the merozoite attachment to the erythrocyte. The polypeptide is Merozoite surface protein 2 (Plasmodium falciparum (isolate K1 / Thailand)).